Reading from the N-terminus, the 333-residue chain is Ketol-acid reductoisomerase (NADP(+)) (333 aa).

In terms of domain architecture, KARI N-terminal Rossmann spans 2–182 (ANIYYDDSCD…GGGRAGILET (181 aa)). NADP(+) contacts are provided by residues 25–28 (YGSQ), Arg48, Ser51, Ser53, and 83–86 (DTIQ). The active site involves His108. An NADP(+)-binding site is contributed by Gly134. The KARI C-terminal knotted domain occupies 183-331 (SFREETETDL…TKLRSMMKWL (149 aa)). 4 residues coordinate Mg(2+): Asp191, Glu195, Glu227, and Glu231. Residue Ser252 coordinates substrate.

Belongs to the ketol-acid reductoisomerase family. It depends on Mg(2+) as a cofactor.

The catalysed reaction is (2R)-2,3-dihydroxy-3-methylbutanoate + NADP(+) = (2S)-2-acetolactate + NADPH + H(+). It catalyses the reaction (2R,3R)-2,3-dihydroxy-3-methylpentanoate + NADP(+) = (S)-2-ethyl-2-hydroxy-3-oxobutanoate + NADPH + H(+). It participates in amino-acid biosynthesis; L-isoleucine biosynthesis; L-isoleucine from 2-oxobutanoate: step 2/4. It functions in the pathway amino-acid biosynthesis; L-valine biosynthesis; L-valine from pyruvate: step 2/4. Functionally, involved in the biosynthesis of branched-chain amino acids (BCAA). Catalyzes an alkyl-migration followed by a ketol-acid reduction of (S)-2-acetolactate (S2AL) to yield (R)-2,3-dihydroxy-isovalerate. In the isomerase reaction, S2AL is rearranged via a Mg-dependent methyl migration to produce 3-hydroxy-3-methyl-2-ketobutyrate (HMKB). In the reductase reaction, this 2-ketoacid undergoes a metal-dependent reduction by NADPH to yield (R)-2,3-dihydroxy-isovalerate. The polypeptide is Ketol-acid reductoisomerase (NADP(+)) (Leptospira biflexa serovar Patoc (strain Patoc 1 / Ames)).